Reading from the N-terminus, the 291-residue chain is Hydroxysteroid 11-beta-dehydrogenase 1-like protein A (291 aa).

A signal peptide spans 1–18 (MAGVKLLLLSLCVGYTAY). NADP(+)-binding positions include 40 to 66 (GSST…TARR), 91 to 92 (DM), and 118 to 120 (NHI). Ser-170 serves as a coordination point for substrate. The Proton acceptor role is filled by Tyr-183. NADP(+) is bound by residues 183–187 (YCASK) and 216–222 (GYIDTEN).

This sequence belongs to the short-chain dehydrogenases/reductases (SDR) family.

The protein resides in the secreted. The catalysed reaction is cortisone + NADPH + H(+) = cortisol + NADP(+). In terms of biological role, unidirectional NADP(+)-dependent cortisol dehydrogenase (in vitro). This is Hydroxysteroid 11-beta-dehydrogenase 1-like protein A (hsd11b1l-a) from Xenopus laevis (African clawed frog).